A 248-amino-acid chain; its full sequence is MSSRKFFVGGNWKMNGDKESLGELIMTLNTASLNDETDVVCGAPSIYLDYARSKLDQRIGVAAQNCYKVPKGAFTGEISPAMIKDCGIDWVILGHSERRHVFGESDELIGQKVAHCLESDLGVIACIGEKLEEREAGTTEDVVFEQTKVIADNVKDWTRVVLAYEPVWAIGTGKTASPEQAQEVHEKLRGWLRANVSDAVADSVRIIYGGSVTGGNCKELAAQADVDGFLVGGASLKPEFVDIINARS.

Positions 11 and 13 each coordinate substrate. The active-site Electrophile is His95. Residue Glu165 is the Proton acceptor of the active site.

It belongs to the triosephosphate isomerase family. As to quaternary structure, homodimer.

The protein localises to the cytoplasm. It carries out the reaction dihydroxyacetone phosphate = methylglyoxal + phosphate. It catalyses the reaction D-glyceraldehyde 3-phosphate = dihydroxyacetone phosphate. Its pathway is carbohydrate degradation; glycolysis; D-glyceraldehyde 3-phosphate from glycerone phosphate: step 1/1. It participates in carbohydrate biosynthesis; gluconeogenesis. Its function is as follows. Triosephosphate isomerase is an extremely efficient metabolic enzyme that catalyzes the interconversion between dihydroxyacetone phosphate (DHAP) and D-glyceraldehyde-3-phosphate (G3P) in glycolysis and gluconeogenesis. Functionally, it is also responsible for the non-negligible production of methylglyoxal a reactive cytotoxic side-product that modifies and can alter proteins, DNA and lipids. This is Triosephosphate isomerase A (tpi1a) from Danio rerio (Zebrafish).